The primary structure comprises 583 residues: Kelch-like protein 35 (583 aa).

One can recognise a BTB domain in the interval 41-119; the sequence is TDVVLRAGGR…VYGAGVRLRA (79 aa). The BACK domain occupies 146-248; sequence LEGRLRAANS…LEHVRLPLLA (103 aa). Kelch repeat units lie at residues 301 to 350, 352 to 394, 395 to 441, 443 to 489, 490 to 531, and 533 to 579; these read VIVV…ALRN, VYVS…VVQG, QLFA…SCAG, LFVI…SLED, TIYV…VCDG, and VHIL…TIIQ.

The sequence is that of Kelch-like protein 35 (KLHL35) from Homo sapiens (Human).